A 128-amino-acid polypeptide reads, in one-letter code: RutC family protein BU371 (128 aa).

Belongs to the RutC family.

The polypeptide is RutC family protein BU371 (Buchnera aphidicola subsp. Acyrthosiphon pisum (strain APS) (Acyrthosiphon pisum symbiotic bacterium)).